The sequence spans 330 residues: Solute-binding protein NAS141_03721 (330 aa).

Positions 1–27 (MSFFTKTAQLVSGAAVAATLFTATAQA) are cleaved as a signal peptide. Alpha-D-mannuronate is bound by residues glutamate 75, asparagine 97, arginine 153, arginine 173, tyrosine 196, 213–214 (NE), and arginine 240. Residues glutamate 75, asparagine 97, arginine 153, arginine 173, tyrosine 196, 213-214 (NE), and arginine 240 contribute to the alpha-D-taluronate site.

This sequence belongs to the bacterial solute-binding protein 7 family. The complex is comprised of an extracytoplasmic solute-binding protein and a heteromeric permease formed by two transmembrane proteins.

It localises to the periplasm. In terms of biological role, solute-binding protein that binds D-mannuronate and D-taluronate (in vitro). Probably part of a tripartite ATP-independent periplasmic (TRAP) transport system that mediates solute transport into the cytoplasm. This chain is Solute-binding protein NAS141_03721, found in Sulfitobacter sp. (strain NAS-14.1).